The sequence spans 289 residues: Shikimate dehydrogenase (NADP(+)) (289 aa).

Shikimate-binding positions include 19 to 21 (SLS) and T66. Catalysis depends on K70, which acts as the Proton acceptor. 2 residues coordinate shikimate: N91 and D106. Residues 131-135 (GNGGA) and L229 each bind NADP(+). Residue Y231 participates in shikimate binding. G252 is an NADP(+) binding site.

Belongs to the shikimate dehydrogenase family. As to quaternary structure, homodimer.

The catalysed reaction is shikimate + NADP(+) = 3-dehydroshikimate + NADPH + H(+). It functions in the pathway metabolic intermediate biosynthesis; chorismate biosynthesis; chorismate from D-erythrose 4-phosphate and phosphoenolpyruvate: step 4/7. Functionally, involved in the biosynthesis of the chorismate, which leads to the biosynthesis of aromatic amino acids. Catalyzes the reversible NADPH linked reduction of 3-dehydroshikimate (DHSA) to yield shikimate (SA). The sequence is that of Shikimate dehydrogenase (NADP(+)) from Trichormus variabilis (strain ATCC 29413 / PCC 7937) (Anabaena variabilis).